The chain runs to 382 residues: uncharacterized protein (382 aa).

11 helical membrane-spanning segments follow: residues 8–28 (VLLL…LNTL), 41–61 (WQVG…TLIA), 73–93 (SYHC…LTVD), 94–114 (FWSW…IWVI), 133–153 (AAYM…LGIV), 157–177 (LLSV…PLLF), 208–228 (GCII…LYLS), 235–255 (ASVG…QWPM), 274–294 (VVIL…ALFI), 325–345 (ALLM…SLLM), and 349–369 (SDNL…MMLL).

This sequence belongs to the major facilitator superfamily. YcaD (TC 2.A.1.26) family.

It is found in the cell inner membrane. This is an uncharacterized protein from Yersinia pseudotuberculosis serotype IB (strain PB1/+).